The following is a 211-amino-acid chain: N-(5'-phosphoribosyl)anthranilate isomerase (211 aa).

Belongs to the TrpF family.

It carries out the reaction N-(5-phospho-beta-D-ribosyl)anthranilate = 1-(2-carboxyphenylamino)-1-deoxy-D-ribulose 5-phosphate. The protein operates within amino-acid biosynthesis; L-tryptophan biosynthesis; L-tryptophan from chorismate: step 3/5. The chain is N-(5'-phosphoribosyl)anthranilate isomerase from Pseudomonas aeruginosa (strain UCBPP-PA14).